We begin with the raw amino-acid sequence, 378 residues long: GTP cyclohydrolase-2 (378 aa).

A DHBP synthase-like region spans residues 1-180 (MEEVSSHVKS…IKDMIEFRIK (180 aa)). A GTP cyclohydrolase II region spans residues 181 to 378 (SEKIVERVIE…KMGHLICFND (198 aa)). 229–233 (RIHSE) contributes to the GTP binding site. Zn(2+) is bound by residues cysteine 234, cysteine 245, and cysteine 247. Residues glutamine 250, 273–275 (EGR), and threonine 295 contribute to the GTP site. Residue aspartate 307 is the Proton acceptor of the active site. Arginine 309 acts as the Nucleophile in catalysis. 2 residues coordinate GTP: threonine 330 and lysine 335.

In the N-terminal section; belongs to the DHBP synthase family. It in the C-terminal section; belongs to the GTP cyclohydrolase II family. Zn(2+) serves as cofactor.

The enzyme catalyses GTP + 4 H2O = 2,5-diamino-6-hydroxy-4-(5-phosphoribosylamino)-pyrimidine + formate + 2 phosphate + 3 H(+). It participates in cofactor biosynthesis; riboflavin biosynthesis; 5-amino-6-(D-ribitylamino)uracil from GTP: step 1/4. Catalyzes the conversion of GTP to 2,5-diamino-6-ribosylamino-4(3H)-pyrimidinone 5'-phosphate (DARP), formate and pyrophosphate. The polypeptide is GTP cyclohydrolase-2 (ribA) (Archaeoglobus fulgidus (strain ATCC 49558 / DSM 4304 / JCM 9628 / NBRC 100126 / VC-16)).